The primary structure comprises 702 residues: MNSLFASTARGLEELLKTELENLGAVECQVVQGGVHFKGDTRLVYQSLMWSRLASRIMLPLGECKVYSDLDLYLGVQAINWTEMFNPGATFAVHFSGLNDTIRNSQYGAMKVKDAIVDAFTRKNLPRPNVDRDAPDIRVNVWLHKETASIALDLSGDGLHLRGYRDRAGIAPIKETLAAAIVMRTGWQPGTPLLDPMCGSGTLLIEAAMLATDRAPGLHRGRWGFSGWVQHDEAIWQEVKAEAQTRARKGLAEYSSHFYGSDSDARVIQRARTNARLAGIGELITFEVKDVAQLTNPLPKGPYGTVLSNPPYGERLDSEPALIALHSLLGRIMKNQFGGWNLSLFSASPDLLSCLQLRADKQYKAKNGPLDCVQKNYHVAESTPDSKPAMVAEDYANRLRKNLKKFEKWARQEGIECYRLYDADLPEYNVAVDRYADWVVVQEYAPPKTIDAHKARQRLFDIIAATISVLGIAPNKLVLKTRERQKGKNQYQKLGEKGEFLEVTEYNAHLWVNLTDYLDTGLFLDHRIARRMLGQMSKGKDFLNLFSYTGSATVHAGLGGARSTTTVDMSRTYLEWAERNLRLNGLTGRAHRLIQADCLAWLREANEQFDLIFIDPPTFSNSKRMEDAFDVQRDHMALMKDLKRLLRAGGTIMFSNNKRGFRMDLDGLAKLGLKAQEITQKTLSQDFARNRQIHNCWLITAA.

The 112-residue stretch at 43–154 (LVYQSLMWSR…KETASIALDL (112 aa)) folds into the THUMP domain.

The protein belongs to the methyltransferase superfamily. RlmKL family.

The protein resides in the cytoplasm. It carries out the reaction guanosine(2445) in 23S rRNA + S-adenosyl-L-methionine = N(2)-methylguanosine(2445) in 23S rRNA + S-adenosyl-L-homocysteine + H(+). It catalyses the reaction guanosine(2069) in 23S rRNA + S-adenosyl-L-methionine = N(2)-methylguanosine(2069) in 23S rRNA + S-adenosyl-L-homocysteine + H(+). Functionally, specifically methylates the guanine in position 2445 (m2G2445) and the guanine in position 2069 (m7G2069) of 23S rRNA. This is Ribosomal RNA large subunit methyltransferase K/L from Shigella sonnei (strain Ss046).